The sequence spans 1075 residues: DNA-directed RNA polymerase subunit beta (1075 aa).

The protein belongs to the RNA polymerase beta chain family. As to quaternary structure, in plastids the minimal PEP RNA polymerase catalytic core is composed of four subunits: alpha, beta, beta', and beta''. When a (nuclear-encoded) sigma factor is associated with the core the holoenzyme is formed, which can initiate transcription.

Its subcellular location is the plastid. It is found in the chloroplast. It carries out the reaction RNA(n) + a ribonucleoside 5'-triphosphate = RNA(n+1) + diphosphate. Its function is as follows. DNA-dependent RNA polymerase catalyzes the transcription of DNA into RNA using the four ribonucleoside triphosphates as substrates. The chain is DNA-directed RNA polymerase subunit beta from Sorghum bicolor (Sorghum).